A 211-amino-acid chain; its full sequence is Peptide methionine sulfoxide reductase MsrA (211 aa).

Residue Cys-52 is part of the active site.

Belongs to the MsrA Met sulfoxide reductase family.

The catalysed reaction is L-methionyl-[protein] + [thioredoxin]-disulfide + H2O = L-methionyl-(S)-S-oxide-[protein] + [thioredoxin]-dithiol. The enzyme catalyses [thioredoxin]-disulfide + L-methionine + H2O = L-methionine (S)-S-oxide + [thioredoxin]-dithiol. Has an important function as a repair enzyme for proteins that have been inactivated by oxidation. Catalyzes the reversible oxidation-reduction of methionine sulfoxide in proteins to methionine. The sequence is that of Peptide methionine sulfoxide reductase MsrA from Klebsiella pneumoniae (strain 342).